The primary structure comprises 632 residues: tRNA uridine 5-carboxymethylaminomethyl modification enzyme MnmG (632 aa).

FAD contacts are provided by residues glycine 15–glycine 20, isoleucine 127, and serine 182. Position 276 to 290 (glycine 276 to phenylalanine 290) interacts with NAD(+). Glutamine 373 provides a ligand contact to FAD.

Belongs to the MnmG family. Homodimer. Heterotetramer of two MnmE and two MnmG subunits. FAD is required as a cofactor.

The protein localises to the cytoplasm. In terms of biological role, NAD-binding protein involved in the addition of a carboxymethylaminomethyl (cmnm) group at the wobble position (U34) of certain tRNAs, forming tRNA-cmnm(5)s(2)U34. In Streptococcus pyogenes serotype M4 (strain MGAS10750), this protein is tRNA uridine 5-carboxymethylaminomethyl modification enzyme MnmG.